The following is a 172-amino-acid chain: Epithelial membrane protein 2 (172 aa).

A run of 4 helical transmembrane segments spans residues 1 to 21 (MLVI…LLFI), 72 to 92 (TMIL…LQLF), 100 to 120 (FVLT…GASV), and 148 to 168 (FILA…YMIL).

This sequence belongs to the PMP-22/EMP/MP20 family. In terms of assembly, interacts with PTK2; regulates PTK2 activation and localization. Interacts with ITGB3; regulates the levels of the heterodimer ITGA5-ITGB3 integrin surface expression. Interacts with P2RX7 (via C-terminus). Interacts with ITGB1; the interaction may be direct or indirect and ITGB1 has a heterodimer form. Expressed in glomeruli.

Its subcellular location is the golgi apparatus membrane. It is found in the cell membrane. It localises to the apical cell membrane. The protein resides in the membrane raft. The protein localises to the cytoplasm. Its subcellular location is the nucleus. It is found in the perinuclear region. Its function is as follows. Functions as a key regulator of cell membrane composition by regulating protein surface expression. Also, plays a role in regulation of processes including cell migration, cell proliferation, cell contraction and cell adhesion. Regulates transepithelial migration of neutrophils into the alveolar lumen, potentially via mediation of cell surface expression of adhesion markers and lipid raft formation. Negatively regulates caveolae formation by reducing CAV1 expression and CAV1 amount by increasing lysosomal degradation. Facilitates surface trafficking and the formation of lipid rafts bearing GPI-anchor proteins. Regulates surface expression of MHC1 and ICAM1 proteins increasing susceptibility to T-cell mediated cytotoxicity. Regulates the plasma membrane expression of the integrin heterodimers ITGA6-ITGB1, ITGA5-ITGB3 and ITGA5-ITGB1 resulting in modulation of cell-matrix adhesion. Also regulates many processes through PTK2. Regulates blood vessel endothelial cell migration and angiogenesis by regulating VEGF protein expression through PTK2 activation. Regulates cell migration and cell contraction through PTK2 and SRC activation. Regulates focal adhesion density, F-actin conformation and cell adhesion capacity through interaction with PTK2. Positively regulates cell proliferation. Plays a role during cell death and cell blebbing. Promotes angiogenesis and vasculogenesis through induction of VEGFA via a HIF1A-dependent pathway. Also plays a role in embryo implantation by regulating surface trafficking of integrin heterodimer ITGA5-ITGB3. Plays a role in placental angiogenesis and uterine natural killer cell regulation at the maternal-fetal placental interface, however not required in the maternal tissues for a viable pregnancy. Involved in the early stages of embryogenic development and cardiogenesis, potentially via regulation of epithelial-mesenchymal transition timing. May play a role in glomerular filtration. This Rattus norvegicus (Rat) protein is Epithelial membrane protein 2 (Emp2).